A 230-amino-acid chain; its full sequence is MSAMNIAVLVPVKKLDKAKMRMADTLDRSQRRQLMMVTLRRVLSALQKAQIGDVYLVASDPQVKNIACDLCVKFIPDQGDELNPSLELARGELCQNYDALLVVFGDLPMISDKDIKTIVRLGSSKPSCVIAPDKRNVGTNVLFLHPPYLLPFTFGGNSYERFRSNCEKLGVQFLVYQSQNTALDLDYPQDILDLAALRGHKISGLEEILDPGVLAQISQVTSMSGAKMGA.

Phosphoenolpyruvate contacts are provided by threonine 139, glycine 155, and serine 158.

This sequence belongs to the CofC family.

It catalyses the reaction phosphoenolpyruvate + GTP + H(+) = enolpyruvoyl-2-diphospho-5'-guanosine + diphosphate. The protein operates within cofactor biosynthesis; coenzyme F420 biosynthesis. In terms of biological role, guanylyltransferase that catalyzes the activation of phosphoenolpyruvate (PEP) as enolpyruvoyl-2-diphospho-5'-guanosine, via the condensation of PEP with GTP. It is involved in the biosynthesis of coenzyme F420, a hydride carrier cofactor. The chain is Phosphoenolpyruvate guanylyltransferase from Thermobaculum terrenum (strain ATCC BAA-798 / CCMEE 7001 / YNP1).